The primary structure comprises 689 residues: Putative ATP-dependent helicase IRC3 (689 aa).

Residues 46 to 211 (NSIRQGTKRI…SMVMDKIVYH (166 aa)) form the Helicase ATP-binding domain. 59 to 66 (LATGGGKT) lines the ATP pocket. The short motif at 158–161 (DEAH) is the DEAH box element. Residues 265–438 (ILKTYLHKKQ…KIDERLRALF (174 aa)) form the Helicase C-terminal domain.

Belongs to the helicase family. IRC3 subfamily.

The protein resides in the mitochondrion. This is Putative ATP-dependent helicase IRC3 (IRC3) from Saccharomyces cerevisiae (strain ATCC 204508 / S288c) (Baker's yeast).